A 309-amino-acid chain; its full sequence is Porphobilinogen deaminase (309 aa).

Cys-244 bears the S-(dipyrrolylmethanemethyl)cysteine mark.

This sequence belongs to the HMBS family. Monomer. Requires dipyrromethane as cofactor.

It catalyses the reaction 4 porphobilinogen + H2O = hydroxymethylbilane + 4 NH4(+). It participates in porphyrin-containing compound metabolism; protoporphyrin-IX biosynthesis; coproporphyrinogen-III from 5-aminolevulinate: step 2/4. Functionally, tetrapolymerization of the monopyrrole PBG into the hydroxymethylbilane pre-uroporphyrinogen in several discrete steps. The protein is Porphobilinogen deaminase of Rhizobium meliloti (strain 1021) (Ensifer meliloti).